Consider the following 105-residue polypeptide: Large ribosomal subunit protein uL24 (105 aa).

The protein belongs to the universal ribosomal protein uL24 family. As to quaternary structure, part of the 50S ribosomal subunit.

Its function is as follows. One of two assembly initiator proteins, it binds directly to the 5'-end of the 23S rRNA, where it nucleates assembly of the 50S subunit. One of the proteins that surrounds the polypeptide exit tunnel on the outside of the subunit. The chain is Large ribosomal subunit protein uL24 from Mycobacterium sp. (strain JLS).